Reading from the N-terminus, the 417-residue chain is Peptide chain release factor subunit 1 (417 aa).

This sequence belongs to the eukaryotic release factor 1 family. In terms of assembly, heterodimer of two subunits, one of which binds GTP.

It localises to the cytoplasm. Directs the termination of nascent peptide synthesis (translation) in response to the termination codons UAA, UAG and UGA. This Thermoplasma acidophilum (strain ATCC 25905 / DSM 1728 / JCM 9062 / NBRC 15155 / AMRC-C165) protein is Peptide chain release factor subunit 1 (prf1).